The chain runs to 86 residues: Actinorhodin polyketide synthase acyl carrier protein (86 aa).

Residues 4–82 (LLTTDDLRRA…ELLDLINGAL (79 aa)) enclose the Carrier domain. O-(pantetheine 4'-phosphoryl)serine is present on Ser42.

Post-translationally, 4'-phosphopantetheine is transferred from CoA to a specific serine of the apo-ACP-like protein.

The protein operates within antibiotic biosynthesis; actinorhodin biosynthesis. Functionally, acyl carrier protein. The sequence is that of Actinorhodin polyketide synthase acyl carrier protein from Streptomyces coelicolor (strain ATCC BAA-471 / A3(2) / M145).